The primary structure comprises 288 residues: Pyridoxal kinase PdxY (288 aa).

Substrate is bound by residues Ser9 and 44-45; that span reads TQ. The ATP site is built by Asp111, Glu148, and Lys181. Asp224 contributes to the substrate binding site.

This sequence belongs to the pyridoxine kinase family. PdxY subfamily. Homodimer. Mg(2+) serves as cofactor.

It catalyses the reaction pyridoxal + ATP = pyridoxal 5'-phosphate + ADP + H(+). Its pathway is cofactor metabolism; pyridoxal 5'-phosphate salvage; pyridoxal 5'-phosphate from pyridoxal: step 1/1. In terms of biological role, pyridoxal kinase involved in the salvage pathway of pyridoxal 5'-phosphate (PLP). Catalyzes the phosphorylation of pyridoxal to PLP. The chain is Pyridoxal kinase PdxY from Haemophilus influenzae (strain PittEE).